A 474-amino-acid chain; its full sequence is MFS transporter SAT21 (474 aa).

A run of 6 helical transmembrane segments spans residues 7 to 27 (LVLPFILYLLFRLSHFLLEVP), 64 to 84 (LVVGWKMTFDSIPGLMSILYF), 101 to 121 (CVGYLLAILWVLITCLFHQVF), 131 to 151 (LFLFIGGGQLVFAAVITAFVA), 162 to 182 (FLFLLAAMPHMDKVASPALAT), and 189 to 209 (LFLPSLVSMAIVVICVALLQM). The segment at 220-252 (KVVGSTSDQTEPFLRSSSNSSQESGTAAPAIDP) is disordered. Residues 222–244 (VGSTSDQTEPFLRSSSNSSQESG) are compositionally biased toward polar residues. N238 is a glycosylation site (N-linked (GlcNAc...) asparagine). The next 6 membrane-spanning stretches (helical) occupy residues 276–296 (FICYLCFFLKSNAMASEAFIF), 315–335 (LALSSGAVISTLIICPLANAT), 346–366 (INIGAVHASSIVLVASFIMAW), 374–394 (FIFSMLAAGFGEGLEPALQGV), 406–426 (SIFALMCTCSLLGDMTGGPLM), and 445–465 (FLASALVFGAVIVLAHLLWAL).

Belongs to the major facilitator superfamily.

The protein resides in the cell membrane. MFS transporter; part of the satratoxin SC3 cluster involved in the biosynthesis of satratoxins, trichothecene mycotoxins that are associated with human food poisonings. Satratoxins are suggested to be made by products of multiple gene clusters (SC1, SC2 and SC3) that encode 21 proteins in all, including polyketide synthases, acetyltransferases, and other enzymes expected to modify the trichothecene skeleton. SC1 encodes 10 proteins, SAT1 to SAT10. The largest are SAT8, which encodes a putative polyketide synthase (PKS) with a conventional non-reducing architecture, and SAT10, a putative protein containing four ankyrin repeats and thus may be involved in protein scaffolding. The putative short-chain reductase SAT3 may assist the PKS in some capacity. SAT6 contains a secretory lipase domain and acts probably as a trichothecene esterase. SAT5 encodes a putative acetyltransferase, and so, with SAT6, may affect endogenous protection from toxicity. The probable transcription factor SAT9 may regulate the expression of the SC1 cluster. SC2 encodes proteins SAT11 to SAT16, the largest of which encodes the putative reducing PKS SAT13. SAT11 is a cytochrome P450 monooxygenase, while SAT14 and SAT16 are probable acetyltransferases. The SC2 cluster may be regulated by the transcription factor SAT15. SC3 is a small cluster that encodes 5 proteins, SAT17 to SAT21. SAT21 is a putative MFS-type transporter which may have a role in exporting secondary metabolites. The four other proteins putatively encoded in SC3 include the taurine hydroxylase-like protein SAT17, the O-methyltransferase SAT18, the acetyltransferase SAT19, and the Cys6-type zinc finger SAT20, the latter being probably involved in regulation of SC3 expression. The protein is MFS transporter SAT21 of Stachybotrys chartarum (strain CBS 109288 / IBT 7711) (Toxic black mold).